Reading from the N-terminus, the 518-residue chain is Retinal dehydrogenase 2 (518 aa).

Residue Y168 is modified to Phosphotyrosine. NAD(+) contacts are provided by residues 184–186 (IPW), 210–213 (KPAE), and 264–266 (STE). Residue E286 is the Proton acceptor of the active site. The Nucleophile role is filled by C320. Position 351 is a phosphoserine (S351). NAD(+) contacts are provided by residues 366 to 370 (KQYNK) and E417.

It belongs to the aldehyde dehydrogenase family. As to quaternary structure, homotetramer.

Its subcellular location is the cytoplasm. The enzyme catalyses retinal + NAD(+) + H2O = retinoate + NADH + 2 H(+). The catalysed reaction is all-trans-retinal + NAD(+) + H2O = all-trans-retinoate + NADH + 2 H(+). It carries out the reaction all-trans-13,14-dihydroretinal + NAD(+) + H2O = all-trans-13,14-dihydroretinoate + NADH + 2 H(+). The protein operates within cofactor metabolism; retinol metabolism. Its function is as follows. Catalyzes the NAD-dependent oxidation of aldehyde substrates, such as all-trans-retinal and all-trans-13,14-dihydroretinal, to their corresponding carboxylic acids, all-trans-retinoate and all-trans-13,14-dihydroretinoate, respectively. Retinoate signaling is critical for the transcriptional control of many genes, for instance it is crucial for initiation of meiosis in both male and female. Recognizes retinal as substrate, both in its free form and when bound to cellular retinol-binding protein. Can metabolize octanal and decanal, but has only very low activity with benzaldehyde, acetaldehyde and propanal. Displays complete lack of activity with citral. In Homo sapiens (Human), this protein is Retinal dehydrogenase 2 (ALDH1A2).